The sequence spans 2250 residues: DNA polymerase epsilon catalytic subunit A (2250 aa).

Disordered regions lie at residues 1 to 63, 235 to 259, and 1990 to 2010; these read MPSR…GTAA, NGHGDDENRAWGAEDDTKKKKDKEP, and PGTEATSTMNPTKEKEKKAAS. Positions 32 to 41 are enriched in gly residues; the sequence is GGGGGGGGVA. A compositionally biased stretch (basic and acidic residues) spans 249 to 259; sequence DDTKKKKDKEP. The span at 1990 to 2000 shows a compositional bias: polar residues; sequence PGTEATSTMNP. Zn(2+)-binding residues include cysteine 2118, cysteine 2121, cysteine 2156, and cysteine 2159. A CysA-type zinc finger spans residues 2118–2159; that stretch reads CKKCNAIRDVDLCRDPDRLPSVNPDSGEMLEPARKNWVCHKC. Positions 2190, 2193, 2205, and 2207 each coordinate [4Fe-4S] cluster. Positions 2190-2207 match the CysB motif motif; that stretch reads CLKCSQTKSDNLAATCKC.

The protein belongs to the DNA polymerase type-B family. Heterotetramer. Consists of 4 subunits: POL2, DPB2, DPB3 and DPB4. It depends on [4Fe-4S] cluster as a cofactor.

It localises to the nucleus. It carries out the reaction DNA(n) + a 2'-deoxyribonucleoside 5'-triphosphate = DNA(n+1) + diphosphate. In terms of biological role, DNA polymerase II participates in chromosomal DNA replication. In Cryptococcus neoformans var. neoformans serotype D (strain JEC21 / ATCC MYA-565) (Filobasidiella neoformans), this protein is DNA polymerase epsilon catalytic subunit A (POL2).